Here is a 138-residue protein sequence, read N- to C-terminus: UPF0355 protein SSP2326 (138 aa).

Residues 115–138 (NVAFETNQTKSNSHYSEETNGPKS) form a disordered region. Residues 118–138 (FETNQTKSNSHYSEETNGPKS) are compositionally biased toward polar residues.

It belongs to the UPF0355 family.

This is UPF0355 protein SSP2326 from Staphylococcus saprophyticus subsp. saprophyticus (strain ATCC 15305 / DSM 20229 / NCIMB 8711 / NCTC 7292 / S-41).